Consider the following 201-residue polypeptide: Small ribosomal subunit protein uS4 (201 aa).

Residues Ala-93–Asp-153 enclose the S4 RNA-binding domain.

This sequence belongs to the universal ribosomal protein uS4 family. Part of the 30S ribosomal subunit. Contacts protein S5. The interaction surface between S4 and S5 is involved in control of translational fidelity.

Functionally, one of the primary rRNA binding proteins, it binds directly to 16S rRNA where it nucleates assembly of the body of the 30S subunit. With S5 and S12 plays an important role in translational accuracy. The chain is Small ribosomal subunit protein uS4 from Flavobacterium psychrophilum (strain ATCC 49511 / DSM 21280 / CIP 103535 / JIP02/86).